The sequence spans 455 residues: Neuronal acetylcholine receptor subunit beta-3 (455 aa).

The first 20 residues, 1–20, serve as a signal peptide directing secretion; that stretch reads MLCLMLCVLCWSRSDVAALG. The Extracellular portion of the chain corresponds to 21 to 229; sequence SVVENEDALL…VTYSFVLRRL (209 aa). N48 and N163 each carry an N-linked (GlcNAc...) asparagine glycan. Cysteines 150 and 164 form a disulfide. 3 consecutive transmembrane segments (helical) span residues 230–254, 262–279, and 296–317; these read PLFY…VFYL, LSLS…LLVI, and YLLF…VINV. Residues 318–425 lie on the Cytoplasmic side of the membrane; the sequence is HHRSSATYHP…WKFVAQVLDR (108 aa). A helical transmembrane segment spans residues 426–444; sequence IFLWLFLVVSVTGSVLIFT.

It belongs to the ligand-gated ion channel (TC 1.A.9) family. Acetylcholine receptor (TC 1.A.9.1) subfamily. Beta-3/CHRNB3 sub-subfamily. Neuronal AChR seems to be composed of two different type of subunits: alpha and beta. CHRNB3/beta-3 subunit is only able to form functional nAChRs when co-assembled with another beta subunit. Participates in pentameric assemblies along with CHRNA4/alpha-4 and CHRNB2/beta-2 subunits and with CHRNA6/alpha-6 as well, forming stoichiometries such as (CHRNA3:CHRNB4)2:CHRNB3, (CHRNA4:CHRNB2)2:CHRNB3 or (CHRNA6:CHRNB2)2:CHRNB3. As to expression, relatively abundant in the developing retina and in the trigeminal ganglion.

The protein resides in the synaptic cell membrane. It is found in the cell membrane. It catalyses the reaction Ca(2+)(in) = Ca(2+)(out). The catalysed reaction is K(+)(in) = K(+)(out). The enzyme catalyses Na(+)(in) = Na(+)(out). Its activity is regulated as follows. Activated by a myriad of ligands such as acetylcholine, cytisine, nicotine, choline and epibatidine. Component of neuronal acetylcholine receptors (nAChRs) that function as pentameric, ligand-gated cation channels with high calcium permeability among other activities. nAChRs are excitatory neurotrasnmitter receptors formed by a collection of nAChR subunits known to mediate synaptic transmission in the nervous system and the neuromuscular junction. Each nAchR subunit confers differential attributes to channel properties, including activation, deactivation and desensitization kinetics, pH sensitivity, cation permeability, and binding to allosteric modulators. Has an accessory rather than functional role and is only able to form functional nAChRs when co-assembled with another beta subunit. Participates in pentameric assemblies along with CHRNA3, CHRNA4, CHRNA6, CHRNB2 and CHRNB4. Modulates receptor assembly and increases receptor sensitivity to nicotine when associated with CHRNB2, CHRNA4 and/or CHRNA6 as well as CHRNA3 and CHRNB4. Seems to play a role in nicotine addiction. In Gallus gallus (Chicken), this protein is Neuronal acetylcholine receptor subunit beta-3 (CHRNB3).